The following is a 371-amino-acid chain: Cytochrome b (371 aa).

4 consecutive transmembrane segments (helical) span residues Phe-24 to Leu-44, Trp-68 to Ile-89, Trp-104 to Leu-124, and Phe-169 to Val-189. Heme b-binding residues include His-74 and His-88. Residues His-173 and His-187 each coordinate heme b. His-192 provides a ligand contact to a ubiquinone. Helical transmembrane passes span Tyr-217–Ala-237, Leu-279–His-299, Leu-311–Thr-331, and Phe-338–Pro-357.

The protein belongs to the cytochrome b family. In terms of assembly, the cytochrome bc1 complex contains 3 respiratory subunits (MT-CYB, CYC1 and UQCRFS1), 2 core proteins (UQCRC1 and UQCRC2) and probably 6 low-molecular weight proteins. The cofactor is heme b.

It is found in the mitochondrion inner membrane. Its function is as follows. Component of the ubiquinol-cytochrome c reductase complex (complex III or cytochrome b-c1 complex) that is part of the mitochondrial respiratory chain. The b-c1 complex mediates electron transfer from ubiquinol to cytochrome c. Contributes to the generation of a proton gradient across the mitochondrial membrane that is then used for ATP synthesis. The sequence is that of Cytochrome b (MT-CYB) from Homoroselaps lacteus (Spotted harlequin snake).